A 306-amino-acid polypeptide reads, in one-letter code: Protein FdhE homolog (306 aa).

This sequence belongs to the FdhE family.

The protein resides in the cytoplasm. In terms of biological role, necessary for formate dehydrogenase activity. This Glaesserella parasuis serovar 5 (strain SH0165) (Haemophilus parasuis) protein is Protein FdhE homolog.